We begin with the raw amino-acid sequence, 174 residues long: Probable NAD(P)H dehydrogenase subunit CRR3, chloroplastic (174 aa).

The N-terminal 54 residues, 1–54 (MAVLSTIYSITRASTPTMASLTNDSPSPLPSSSPSKLPSPTSPSKKPLKLRQVS), are a transit peptide targeting the chloroplast. A compositionally biased stretch (polar residues) spans 14 to 24 (STPTMASLTND). A disordered region spans residues 14-71 (STPTMASLTNDSPSPLPSSSPSKLPSPTSPSKKPLKLRQVSKQMGSQNQQRRGNKPSI). Over residues 30-45 (PSSSPSKLPSPTSPSK) the composition is skewed to low complexity. Residues 53–64 (VSKQMGSQNQQR) show a composition bias toward polar residues. Residues 140–160 (FTIQWILPIWIMSLLVACGVI) form a helical membrane-spanning segment.

It is found in the plastid. It localises to the chloroplast thylakoid membrane. Probable subunit of the chloroplast NAD(P)H dehydrogenase (NDH) complex of the photosynthetic electron transport chain. Required for both formation and activity of NDH. May function in assembly or stabilization of the NDH complex. The chain is Probable NAD(P)H dehydrogenase subunit CRR3, chloroplastic from Arabidopsis thaliana (Mouse-ear cress).